The following is a 42-amino-acid chain: uncharacterized protein (42 aa).

This is an uncharacterized protein from Escherichia coli (Bacteriophage T4).